The following is a 568-amino-acid chain: Protein phosphatase 1 regulatory inhibitor subunit 16B (568 aa).

Residues 15 to 55 (EKVPTLERLRAAQKRRAQQLKKWAQYEQDLLHRKRKHERKR) are a coiled coil. Ser-69 bears the Phosphoserine mark. ANK repeat units follow at residues 100-129 (DGLT…NVNA), 133-162 (ELWT…DLLA), 228-257 (QGAT…RVDV), and 261-290 (DGWE…SLSA). Phosphoserine is present on residues Ser-333, Ser-337, and Ser-350. Residues 373–403 (SAAEDQRTSTYNGDIRETRTDQENKDPNPRL) form a disordered region. Basic and acidic residues predominate over residues 386–403 (DIRETRTDQENKDPNPRL). Residue Ser-477 is modified to Phosphoserine. A compositionally biased stretch (low complexity) spans 505 to 517 (SSVARSGESSSEG). Residues 505–527 (SSVARSGESSSEGKAPLIGGRTS) form a disordered region. The ANK 5 repeat unit spans residues 531 to 560 (SNGTSVYYTVTSGDPPLLKFKAPMEEMEEK). Cys-564 carries S-palmitoyl cysteine lipidation. Cys-565 carries the post-translational modification Cysteine methyl ester. Cys-565 carries the S-farnesyl cysteine lipid modification. Positions 566–568 (RIS) are cleaved as a propeptide — removed in mature form.

Interacts with PPP1CA, PPP1CB and MSN. Interacts (via its fourth ankyrin repeat) with the mature dimeric form of RPSA/LAMR1. Interacts with EEF1A1. Interacts with PTEN. Interacts with ECE1. Phosphorylated by PKA and, after PKA priming, by GSK3B. Phosphorylation by GSK3B reduces its association with PP1C and enhances PP1C activity. Dephosphorylation by its associated PP1C results in enhanced association with PP1C, but reduced PP1C activity.

The protein localises to the cell membrane. It is found in the nucleus. It localises to the cell projection. Functionally, regulator of protein phosphatase 1 (PP1) that acts as a positive regulator of pulmonary endothelial cell (EC) barrier function. Protects the endothelial barrier from lipopolysaccharide (LPS)-induced vascular leakage. Involved in the regulation of the PI3K/AKT signaling pathway. Involved in the regulation of angiogenesis and endothelial cell proliferation through the control of ECE1 dephosphorylation, trafficking and activity. Involved in the regulation of endothelial cell filopodia extension. May be a downstream target for TGF-beta1 signaling cascade in endothelial cells. Involved in PKA-mediated moesin dephosphorylation which is important in EC barrier protection against thrombin stimulation. Promotes the interaction of PPP1CA with RPSA/LAMR1 and in turn facilitates the dephosphorylation of RPSA/LAMR1. Involved in the dephosphorylation of EEF1A1. This Mus musculus (Mouse) protein is Protein phosphatase 1 regulatory inhibitor subunit 16B (Ppp1r16b).